A 315-amino-acid chain; its full sequence is ADP/ATP translocase 4 (315 aa).

At 1-19 (MHREPPKKKAEKRLFDASS) the chain is on the mitochondrial intermembrane side. One copy of the Solcar 1 repeat lies at 18 to 110 (SSFGKDLLAG…FAFKDKYKQL (93 aa)). A helical transmembrane segment spans residues 20–49 (FGKDLLAGGVAAAVSKTAVAPIERVKLLLQ). Over 50–86 (VQASSKQISPEARYKGMVDCLVRIPREQGFFSFWRGN) the chain is Mitochondrial matrix. A helical transmembrane segment spans residues 87 to 111 (LANVIRYFPTQALNFAFKDKYKQLF). The ADP site is built by Arg92 and Lys104. Over 112–121 (MSGVNKEKQF) the chain is Mitochondrial intermembrane. Residues 122 to 142 (WRWFLANLASGGAAGATSLCV) form a helical membrane-spanning segment. Solcar repeat units follow at residues 123–213 (RWFL…VKGL) and 220–307 (TPFL…IKEF). Residues 143–190 (VYPLDFARTRLGVDIGKGPEERQFKGLGDCIMKIAKSDGIAGLYQGFG) are Mitochondrial matrix-facing. The helical transmembrane segment at 191–211 (VSVQGIIVYRASYFGAYDTVK) threads the bilayer. The Mitochondrial intermembrane segment spans residues 212–222 (GLLPKPKKTPF). The helical transmembrane segment at 223–243 (LVSFFIAQVVTTCSGILSYPF) threads the bilayer. The Mitochondrial matrix portion of the chain corresponds to 244 to 283 (DTVRRRMMMQSGEAKRQYKGTLDCFVKIYQHEGINSFFRG). Residue Arg247 coordinates ADP. Positions 247–252 (RRRMMM) are important for transport activity. The short motif at 247 to 252 (RRRMMM) is the Nucleotide carrier signature motif element. Residues 284–301 (AFSNVLRGTGGALVLVLY) traverse the membrane as a helical segment. Over 302-315 (DKIKEFFHIDIGGR) the chain is Mitochondrial intermembrane.

It belongs to the mitochondrial carrier (TC 2.A.29) family. As to quaternary structure, monomer.

The protein resides in the mitochondrion inner membrane. It localises to the membrane. The protein localises to the cell projection. It is found in the cilium. Its subcellular location is the flagellum membrane. It catalyses the reaction ADP(in) + ATP(out) = ADP(out) + ATP(in). The enzyme catalyses dATP(out) + ADP(in) = dATP(in) + ADP(out). The catalysed reaction is dADP(in) + ADP(out) = dADP(out) + ADP(in). It carries out the reaction H(+)(in) = H(+)(out). The matrix-open state (m-state) is inhibited by the membrane-permeable bongkrekic acid (BKA). The cytoplasmic-open state (c-state) is inhibited by the membrane-impermeable toxic inhibitor carboxyatractyloside (CATR). Proton transporter activity is inhibited by ADP:ATP antiporter activity. ADP:ATP antiporter that mediates import of ADP into the mitochondrial matrix for ATP synthesis, and export of ATP out to fuel the cell. Cycles between the cytoplasmic-open state (c-state) and the matrix-open state (m-state): operates by the alternating access mechanism with a single substrate-binding site intermittently exposed to either the cytosolic (c-state) or matrix (m-state) side of the inner mitochondrial membrane. Specifically required during spermatogenesis, probably to mediate ADP:ATP exchange in spermatocytes. Large ATP supplies from mitochondria may be critical for normal progression of spermatogenesis during early stages of meiotic prophase I, including DNA double-strand break repair and chromosomal synapsis. In addition to its ADP:ATP antiporter activity, also involved in mitochondrial uncoupling and mitochondrial permeability transition pore (mPTP) activity. Plays a role in mitochondrial uncoupling by acting as a proton transporter: proton transport uncouples the proton flows via the electron transport chain and ATP synthase to reduce the efficiency of ATP production and cause mitochondrial thermogenesis. Proton transporter activity is inhibited by ADP:ATP antiporter activity, suggesting that SLC25A31/ANT4 acts as a master regulator of mitochondrial energy output by maintaining a delicate balance between ATP production (ADP:ATP antiporter activity) and thermogenesis (proton transporter activity). Proton transporter activity requires free fatty acids as cofactor, but does not transport it. Among nucleotides, may also exchange ADP for dATP and dADP. Also plays a key role in mPTP opening, a non-specific pore that enables free passage of the mitochondrial membranes to solutes of up to 1.5 kDa, and which contributes to cell death. It is however unclear if SLC25A31/ANT4 constitutes a pore-forming component of mPTP or regulates it. The sequence is that of ADP/ATP translocase 4 from Macaca fascicularis (Crab-eating macaque).